We begin with the raw amino-acid sequence, 213 residues long: Ras-like protein rasX (213 aa).

Position 16 to 23 (16 to 23) interacts with GTP; that stretch reads GDGGVGKT. The Effector region signature appears at 38-46; it reads YDPTIEDSY. Residues 63–67 and 122–125 contribute to the GTP site; these read DTAGQ and NKSD. Cys-210 bears the Cysteine methyl ester mark. Cys-210 is lipidated: S-geranylgeranyl cysteine. Positions 211–213 are cleaved as a propeptide — removed in mature form; that stretch reads KMM.

It belongs to the small GTPase superfamily. Ras family.

It localises to the cell membrane. The enzyme catalyses GTP + H2O = GDP + phosphate + H(+). Functionally, ras proteins bind GDP/GTP and possess intrinsic GTPase activity. This Dictyostelium discoideum (Social amoeba) protein is Ras-like protein rasX (rasX).